A 306-amino-acid chain; its full sequence is Dermonecrotic toxin LiSicTox-alphaIA1bi (306 aa).

Positions 1-18 (MLPYIVLVLGCWSVLSQA) are cleaved as a signal peptide. Positions 19–26 (AQTDDEER) are excised as a propeptide. H38 is a catalytic residue. Residues E58 and D60 each coordinate Mg(2+). Catalysis depends on H74, which acts as the Nucleophile. 2 cysteine pairs are disulfide-bonded: C78–C84 and C80–C223. D118 is a binding site for Mg(2+).

This sequence belongs to the arthropod phospholipase D family. Class II subfamily. Class IIa sub-subfamily. The cofactor is Mg(2+). Expressed by the venom gland.

The protein resides in the secreted. It catalyses the reaction an N-(acyl)-sphingosylphosphocholine = an N-(acyl)-sphingosyl-1,3-cyclic phosphate + choline. The catalysed reaction is an N-(acyl)-sphingosylphosphoethanolamine = an N-(acyl)-sphingosyl-1,3-cyclic phosphate + ethanolamine. It carries out the reaction a 1-acyl-sn-glycero-3-phosphocholine = a 1-acyl-sn-glycero-2,3-cyclic phosphate + choline. The enzyme catalyses a 1-acyl-sn-glycero-3-phosphoethanolamine = a 1-acyl-sn-glycero-2,3-cyclic phosphate + ethanolamine. Functionally, dermonecrotic toxins cleave the phosphodiester linkage between the phosphate and headgroup of certain phospholipids (sphingolipid and lysolipid substrates), forming an alcohol (often choline) and a cyclic phosphate. This toxin acts on sphingomyelin (SM). The level of enzymatic activity is high according to Tambourgi and colleagues or low according to Felicori and colleagues. It may also act on ceramide phosphoethanolamine (CPE), lysophosphatidylcholine (LPC) and lysophosphatidylethanolamine (LPE), but not on lysophosphatidylserine (LPS), and lysophosphatidylglycerol (LPG). It acts by transphosphatidylation, releasing exclusively cyclic phosphate products as second products. It induces complement-dependent hemolysis, dermonecrosis, vascular permeability and platelet aggregation. Both C5a and the membrane attack complex may play a role in the induction of dermonecrosis. MMP-9 and MMP-2 produced by skin fibroblasts can also contribute to proteolytic tissue destruction. This chain is Dermonecrotic toxin LiSicTox-alphaIA1bi, found in Loxosceles intermedia (Brown spider).